We begin with the raw amino-acid sequence, 878 residues long: Alanine--tRNA ligase (878 aa).

Histidine 566, histidine 570, cysteine 668, and histidine 672 together coordinate Zn(2+).

Belongs to the class-II aminoacyl-tRNA synthetase family. Zn(2+) is required as a cofactor.

The protein localises to the cytoplasm. It carries out the reaction tRNA(Ala) + L-alanine + ATP = L-alanyl-tRNA(Ala) + AMP + diphosphate. Functionally, catalyzes the attachment of alanine to tRNA(Ala) in a two-step reaction: alanine is first activated by ATP to form Ala-AMP and then transferred to the acceptor end of tRNA(Ala). Also edits incorrectly charged Ser-tRNA(Ala) and Gly-tRNA(Ala) via its editing domain. This Bacillus velezensis (strain DSM 23117 / BGSC 10A6 / LMG 26770 / FZB42) (Bacillus amyloliquefaciens subsp. plantarum) protein is Alanine--tRNA ligase.